A 214-amino-acid polypeptide reads, in one-letter code: Glycerol-3-phosphate acyltransferase (214 aa).

5 helical membrane-spanning segments follow: residues 8 to 28 (LILAYLLGSIPTGLWIGQIFF), 70 to 90 (LLPLFLHINGISPMIFGLIAV), 111 to 131 (AGVVLGFSPLFFSYLIIIFIV), 144 to 164 (IVVAGFAIISVLIFPLLGIIL), and 165 to 185 (PSYDLLFTLIIILLASIILIR).

The protein belongs to the PlsY family. As to quaternary structure, probably interacts with PlsX.

It is found in the cell membrane. It catalyses the reaction an acyl phosphate + sn-glycerol 3-phosphate = a 1-acyl-sn-glycero-3-phosphate + phosphate. It functions in the pathway lipid metabolism; phospholipid metabolism. In terms of biological role, catalyzes the transfer of an acyl group from acyl-phosphate (acyl-PO(4)) to glycerol-3-phosphate (G3P) to form lysophosphatidic acid (LPA). This enzyme utilizes acyl-phosphate as fatty acyl donor, but not acyl-CoA or acyl-ACP. This Streptococcus gordonii (strain Challis / ATCC 35105 / BCRC 15272 / CH1 / DL1 / V288) protein is Glycerol-3-phosphate acyltransferase.